The following is a 128-amino-acid chain: Glycine cleavage system H protein (128 aa).

The region spanning 24-106 (VYTVGITEHA…YAEGFLFQIK (83 aa)) is the Lipoyl-binding domain. Lys-65 is modified (N6-lipoyllysine).

It belongs to the GcvH family. As to quaternary structure, the glycine cleavage system is composed of four proteins: P, T, L and H. The cofactor is (R)-lipoate.

Its function is as follows. The glycine cleavage system catalyzes the degradation of glycine. The H protein shuttles the methylamine group of glycine from the P protein to the T protein. This chain is Glycine cleavage system H protein, found in Serratia proteamaculans (strain 568).